A 1184-amino-acid chain; its full sequence is von Willebrand factor A domain-containing protein 3A (1184 aa).

The signal sequence occupies residues 1–24 (MKKYRKISIGCFAMATQTSHVFHG). The segment at 40-62 (GRDSKKPLKQKNMNGLGQNSDNG) is disordered. Residues 50 to 62 (KNMNGLGQNSDNG) are compositionally biased toward polar residues. The stretch at 333–357 (TSRDMDELLAEIQKAQSLLSHVQAL) forms a coiled coil. Positions 511–708 (RVVVLLDISA…SIMSEMEKAL (198 aa)) constitute a VWFA 1 domain. Asn-709 is a glycosylation site (N-linked (GlcNAc...) asparagine). The tract at residues 729 to 780 (LGSSALPKEKPKTLQLRSQPKKLCPPRPTVPLGARMSIKDDPDREKSPPLKS) is disordered. Over residues 765–776 (SIKDDPDREKSP) the composition is skewed to basic and acidic residues. A VWFA 2 domain is found at 959–1131 (KVCILLDTSG…KIHSLLTKGF (173 aa)).

The protein localises to the secreted. This Homo sapiens (Human) protein is von Willebrand factor A domain-containing protein 3A (VWA3A).